Reading from the N-terminus, the 376-residue chain is S-adenosylmethionine synthase (376 aa).

Residue His15 participates in ATP binding. Mg(2+) is bound at residue Asp17. A K(+)-binding site is contributed by Glu43. L-methionine contacts are provided by Glu56 and Gln92. Residues 92–102 form a flexible loop region; sequence QSKEIANQVDR. ATP is bound by residues 156-158, Asp231, 237-238, Ala254, and Lys258; these read DMK and RK. Position 231 (Asp231) interacts with L-methionine. Lys262 lines the L-methionine pocket.

It belongs to the AdoMet synthase family. In terms of assembly, homotetramer; dimer of dimers. The cofactor is Mg(2+). K(+) is required as a cofactor.

The protein resides in the cytoplasm. The enzyme catalyses L-methionine + ATP + H2O = S-adenosyl-L-methionine + phosphate + diphosphate. Its pathway is amino-acid biosynthesis; S-adenosyl-L-methionine biosynthesis; S-adenosyl-L-methionine from L-methionine: step 1/1. Its function is as follows. Catalyzes the formation of S-adenosylmethionine (AdoMet) from methionine and ATP. The overall synthetic reaction is composed of two sequential steps, AdoMet formation and the subsequent tripolyphosphate hydrolysis which occurs prior to release of AdoMet from the enzyme. This is S-adenosylmethionine synthase from Mycoplasmopsis pulmonis (strain UAB CTIP) (Mycoplasma pulmonis).